The chain runs to 228 residues: MFSHQDYLSFVNKKNKMNGIDLFKLIPDKAVKIAFFDPQYRGVLDKMSYGNEGKGRGKERAALPQMTDEIIQQFINEFERVLLPNGYLFLWVDKFHLVEGVKPWLENTPSLSVVDMLTWDKQKIGMGYRTRRRSEYLVVIQKEPKKAKITWTLHNIPDVWAEKLQSKPHTHSKPIEMQKQLILATTQEGDLILDPASGGYSVFECCKQTNRNFIGCDLIFGDDENEQD.

This sequence belongs to the N(4)/N(6)-methyltransferase family.

It catalyses the reaction a 2'-deoxyadenosine in DNA + S-adenosyl-L-methionine = an N(6)-methyl-2'-deoxyadenosine in DNA + S-adenosyl-L-homocysteine + H(+). Functionally, a beta subtype methylase, recognizes the double-stranded sequence 5'-GANTC-3', methylates A-2 on both strands, and protects the DNA from cleavage by the HhaII endonuclease. The sequence is that of Type II methyltransferase M.HhaII from Haemophilus parahaemolyticus.